The following is an 81-amino-acid chain: Exodeoxyribonuclease 7 small subunit (81 aa).

The segment at 61 to 81 is disordered; sequence MNDSDQEVAFETPQGGTGDAD.

Belongs to the XseB family. Heterooligomer composed of large and small subunits.

The protein localises to the cytoplasm. The enzyme catalyses Exonucleolytic cleavage in either 5'- to 3'- or 3'- to 5'-direction to yield nucleoside 5'-phosphates.. Its function is as follows. Bidirectionally degrades single-stranded DNA into large acid-insoluble oligonucleotides, which are then degraded further into small acid-soluble oligonucleotides. The polypeptide is Exodeoxyribonuclease 7 small subunit (Levilactobacillus brevis (strain ATCC 367 / BCRC 12310 / CIP 105137 / JCM 1170 / LMG 11437 / NCIMB 947 / NCTC 947) (Lactobacillus brevis)).